The sequence spans 431 residues: Levansucrase LscB (431 aa).

Sucrose-binding residues include tryptophan 61, aspartate 62, alanine 148, arginine 218, and aspartate 219. The Nucleophile role is filled by aspartate 62. The active-site Proton donor/acceptor is glutamate 303.

Belongs to the glycosyl hydrolase 68 family.

The protein localises to the secreted. It carries out the reaction [6)-beta-D-fructofuranosyl-(2-&gt;](n) alpha-D-glucopyranoside + sucrose = [6)-beta-D-fructofuranosyl-(2-&gt;](n+1) alpha-D-glucopyranoside + D-glucose. Its function is as follows. Catalyzes the synthesis of levan, a fructose polymer, by transferring the fructosyl moiety from sucrose to a growing acceptor molecule. The chain is Levansucrase LscB from Pseudomonas savastanoi pv. glycinea (Pseudomonas syringae pv. glycinea).